Here is a 181-residue protein sequence, read N- to C-terminus: SAGA-associated factor 11 (181 aa).

Residues F93–C114 form an SGF11-type zinc finger. The span at G116–T125 shows a compositional bias: basic residues. The disordered stretch occupies residues G116–D181. Residues T126–S153 show a composition bias toward low complexity.

It belongs to the SGF11 family. Component of a deubiquitination module (DUB module) formed by ENY2, SGF11, and UBP22 in Arabidopsis. Interacts directly with ENY2 and UBP22. Interacts with DDA1. In terms of processing, ubiquitinated in DET1-dependent manner. Ubiquitination probably leads to its subsequent proteasomal degradation.

It is found in the nucleus. The protein resides in the nucleoplasm. Functionally, component of a deubiquitination module (DUB module) that specifically deubiquinates monoubiquinated histone H2B (H2Bub). Does not seem to be a component of the TREX-2 complex. Seems to act independently of the SAGA multiprotein complex. The DUB module is responsible for the major H2Bub deubiquitinase activity in Arabidopsis. The sequence is that of SAGA-associated factor 11 from Arabidopsis thaliana (Mouse-ear cress).